Here is a 150-residue protein sequence, read N- to C-terminus: UPF0756 membrane protein Dd703_1075 (150 aa).

4 helical membrane passes run 8-28 (LLIL…TITL), 51-71 (YGLS…IASG), 81-101 (AFLN…SWLG), and 114-134 (VVAG…GVPV).

Belongs to the UPF0756 family.

The protein resides in the cell membrane. The polypeptide is UPF0756 membrane protein Dd703_1075 (Musicola paradisiaca (strain Ech703) (Dickeya paradisiaca)).